A 344-amino-acid chain; its full sequence is Succinylglutamate desuccinylase (344 aa).

Residues His-63, Glu-66, and His-160 each coordinate Zn(2+). Residue Glu-224 is part of the active site.

It belongs to the AspA/AstE family. Succinylglutamate desuccinylase subfamily. Requires Zn(2+) as cofactor.

The catalysed reaction is N-succinyl-L-glutamate + H2O = L-glutamate + succinate. It participates in amino-acid degradation; L-arginine degradation via AST pathway; L-glutamate and succinate from L-arginine: step 5/5. In terms of biological role, transforms N(2)-succinylglutamate into succinate and glutamate. The chain is Succinylglutamate desuccinylase from Shewanella sp. (strain W3-18-1).